Consider the following 469-residue polypeptide: Putative dipeptidase SAR1836 (469 aa).

Position 84 (His-84) interacts with Zn(2+). Residue Asp-86 is part of the active site. Asp-115 contributes to the Zn(2+) binding site. The active-site Proton acceptor is the Glu-149. 3 residues coordinate Zn(2+): Glu-150, Asp-173, and His-440.

This sequence belongs to the peptidase M20A family. It depends on Zn(2+) as a cofactor.

This chain is Putative dipeptidase SAR1836, found in Staphylococcus aureus (strain MRSA252).